The primary structure comprises 488 residues: Glutamyl-tRNA(Gln) amidotransferase subunit A (488 aa).

Catalysis depends on charge relay system residues Lys-76 and Ser-152. Catalysis depends on Ser-176, which acts as the Acyl-ester intermediate.

The protein belongs to the amidase family. GatA subfamily. Heterotrimer of A, B and C subunits.

The catalysed reaction is L-glutamyl-tRNA(Gln) + L-glutamine + ATP + H2O = L-glutaminyl-tRNA(Gln) + L-glutamate + ADP + phosphate + H(+). In terms of biological role, allows the formation of correctly charged Gln-tRNA(Gln) through the transamidation of misacylated Glu-tRNA(Gln) in organisms which lack glutaminyl-tRNA synthetase. The reaction takes place in the presence of glutamine and ATP through an activated gamma-phospho-Glu-tRNA(Gln). This is Glutamyl-tRNA(Gln) amidotransferase subunit A from Oceanobacillus iheyensis (strain DSM 14371 / CIP 107618 / JCM 11309 / KCTC 3954 / HTE831).